Reading from the N-terminus, the 229-residue chain is Choline-phosphate cytidylyltransferase (229 aa).

7 residues coordinate CDP-choline: leucine 6, alanine 8, glycine 9, tyrosine 80, asparagine 82, serine 85, and alanine 101. Aspartate 102 is a Mg(2+) binding site. A CDP-choline-binding site is contributed by tyrosine 185. Mg(2+)-binding residues include glutamate 211 and aspartate 213.

It belongs to the LicC/PntC cytidylyltransferase family. Monomer. Forms dimers in LicC-CDP-Cho-Mg(2+) crystals, but the monomer is probably the biologically functional unit. Mg(2+) is required as a cofactor.

The enzyme catalyses phosphocholine + CTP + H(+) = CDP-choline + diphosphate. It participates in cell wall biogenesis; teichoic acid biosynthesis. The protein operates within cell wall biogenesis; lipoteichoic acid biosynthesis. Mg(2+) in slight excess of CTP gives maximal activity. Strongly inhibited by Ca(2+) and several other metal ions, such as Cd(2+), Co(2+), Cu(2+), Mn(2+), Ni(2+), Zn(2+) and Fe(2+). Also inhibited by Mg(2+) at high concentrations. CDP-Cho is a competitive inhibitor with respect to CTP, whereas diphosphate is a mixed-type inhibitor with respect to CTP. Its function is as follows. Cytidylyltransferase involved in the biosynthesis of the phosphocholine containing cell wall constituents, teichoic acid and lipoteichoic acid, which are essential for cell separation and pathogenesis. Catalyzes the activation of phosphocholine (P-Cho) to CDP-choline (CDP-Cho). Can also use phosphoethanolamine and 2-aminoethylphosphonate, with much lower efficiency. Shows lower activity with dCTP, weak activity with ATP and no activity with GTP, TTP, UTP, dATP, dGTP and dTTP. In Streptococcus pneumoniae (strain ATCC BAA-255 / R6), this protein is Choline-phosphate cytidylyltransferase.